A 346-amino-acid chain; its full sequence is Sulfate/thiosulfate import ATP-binding protein CysA (346 aa).

Residues 3–237 (VRVANVRKEF…PNSPFVYGFI (235 aa)) enclose the ABC transporter domain. 35 to 42 (GPSGSGKT) serves as a coordination point for ATP.

This sequence belongs to the ABC transporter superfamily. Sulfate/tungstate importer (TC 3.A.1.6) family. The complex is composed of two ATP-binding proteins (CysA), two transmembrane proteins (CysT and CysW) and a solute-binding protein (CysP).

It is found in the cell inner membrane. It carries out the reaction sulfate(out) + ATP + H2O = sulfate(in) + ADP + phosphate + H(+). It catalyses the reaction thiosulfate(out) + ATP + H2O = thiosulfate(in) + ADP + phosphate + H(+). Functionally, part of the ABC transporter complex CysAWTP involved in sulfate/thiosulfate import. Responsible for energy coupling to the transport system. The protein is Sulfate/thiosulfate import ATP-binding protein CysA of Mesorhizobium japonicum (strain LMG 29417 / CECT 9101 / MAFF 303099) (Mesorhizobium loti (strain MAFF 303099)).